The following is a 124-amino-acid chain: Small ribosomal subunit protein uS12 (124 aa).

Asp-89 carries the post-translational modification 3-methylthioaspartic acid.

The protein belongs to the universal ribosomal protein uS12 family. Part of the 30S ribosomal subunit. Contacts proteins S8 and S17. May interact with IF1 in the 30S initiation complex.

Its function is as follows. With S4 and S5 plays an important role in translational accuracy. In terms of biological role, interacts with and stabilizes bases of the 16S rRNA that are involved in tRNA selection in the A site and with the mRNA backbone. Located at the interface of the 30S and 50S subunits, it traverses the body of the 30S subunit contacting proteins on the other side and probably holding the rRNA structure together. The combined cluster of proteins S8, S12 and S17 appears to hold together the shoulder and platform of the 30S subunit. The sequence is that of Small ribosomal subunit protein uS12 from Yersinia pestis (strain Pestoides F).